Reading from the N-terminus, the 588-residue chain is 2-succinyl-5-enolpyruvyl-6-hydroxy-3-cyclohexene-1-carboxylate synthase (588 aa).

Residues 1 to 22 form a disordered region; it reads MTTTGSLPAQPSSTSPRTGNPS.

It belongs to the TPP enzyme family. MenD subfamily. As to quaternary structure, homodimer. Mg(2+) is required as a cofactor. Requires Mn(2+) as cofactor. It depends on thiamine diphosphate as a cofactor.

It catalyses the reaction isochorismate + 2-oxoglutarate + H(+) = 5-enolpyruvoyl-6-hydroxy-2-succinyl-cyclohex-3-ene-1-carboxylate + CO2. The protein operates within quinol/quinone metabolism; 1,4-dihydroxy-2-naphthoate biosynthesis; 1,4-dihydroxy-2-naphthoate from chorismate: step 2/7. It functions in the pathway quinol/quinone metabolism; menaquinone biosynthesis. Its function is as follows. Catalyzes the thiamine diphosphate-dependent decarboxylation of 2-oxoglutarate and the subsequent addition of the resulting succinic semialdehyde-thiamine pyrophosphate anion to isochorismate to yield 2-succinyl-5-enolpyruvyl-6-hydroxy-3-cyclohexene-1-carboxylate (SEPHCHC). This is 2-succinyl-5-enolpyruvyl-6-hydroxy-3-cyclohexene-1-carboxylate synthase from Clavibacter michiganensis subsp. michiganensis (strain NCPPB 382).